We begin with the raw amino-acid sequence, 161 residues long: MSDEGDVADEAVADGAENADSRGSGGRTALVTKPVVRPQRPTGKRSRSRAAGADADVDVEEPSTAASEATGVAKDDSTTKAVSKAARAKKASKPKARSVNPIAFVYNYLKQVVAEMRKVIWPNRKQMLTYTSVVLAFLAFMVALVAGADLGLTKLVMLVFG.

Acidic residues predominate over residues 1–12 (MSDEGDVADEAV). Residues 1-80 (MSDEGDVADE…GVAKDDSTTK (80 aa)) form a disordered region. The chain crosses the membrane as a helical span at residues 133-153 (VVLAFLAFMVALVAGADLGLT).

The protein belongs to the SecE/SEC61-gamma family. As to quaternary structure, component of the Sec protein translocase complex. Heterotrimer consisting of SecY, SecE and SecG subunits. The heterotrimers can form oligomers, although 1 heterotrimer is thought to be able to translocate proteins. Interacts with the ribosome. Interacts with SecDF, and other proteins may be involved. Interacts with SecA.

The protein resides in the cell membrane. Its function is as follows. Essential subunit of the Sec protein translocation channel SecYEG. Clamps together the 2 halves of SecY. May contact the channel plug during translocation. The polypeptide is Protein translocase subunit SecE (Mycobacterium bovis (strain ATCC BAA-935 / AF2122/97)).